We begin with the raw amino-acid sequence, 603 residues long: UvrABC system protein C (603 aa).

Residues 15 to 92 (DKPGCYLMKN…IQKHQPYFNI (78 aa)) enclose the GIY-YIG domain. The UVR domain maps to 197-232 (ATVKRQLTKKMQRAAENMEFERAAEIRDQLHYIEVT).

The protein belongs to the UvrC family. As to quaternary structure, interacts with UvrB in an incision complex.

It is found in the cytoplasm. Its function is as follows. The UvrABC repair system catalyzes the recognition and processing of DNA lesions. UvrC both incises the 5' and 3' sides of the lesion. The N-terminal half is responsible for the 3' incision and the C-terminal half is responsible for the 5' incision. The protein is UvrABC system protein C of Limosilactobacillus reuteri (strain DSM 20016) (Lactobacillus reuteri).